We begin with the raw amino-acid sequence, 1350 residues long: Zinc finger protein Xfin (1350 aa).

One can recognise a KRAB domain in the interval 1 to 58; it reads MEEPKCLQREMYKSVMTENYQCVLSLGYPIRKPEIVSMMEVGEELWSKNDSARPGQKE. The segment at 47 to 68 is disordered; it reads SKNDSARPGQKEVEGETPKESD. 37 C2H2-type zinc fingers span residues 108 to 130, 136 to 158, 164 to 186, 192 to 214, 220 to 242, 248 to 270, 276 to 298, 326 to 348, 354 to 376, 382 to 404, 410 to 432, 438 to 460, 466 to 488, 503 to 525, 531 to 553, 559 to 581, 587 to 609, 615 to 637, 643 to 665, 671 to 693, 699 to 721, 750 to 772, 778 to 800, 806 to 828, 834 to 856, 862 to 884, 890 to 912, 918 to 940, 988 to 1010, 1016 to 1038, 1044 to 1066, 1136 to 1158, 1164 to 1186, 1192 to 1214, 1220 to 1242, 1248 to 1270, and 1276 to 1298; these read HICSHYGKLFSCYAAVVRHQRMH, HHCPHCKKSFVQRSDFIKHQRTH, YQCVECQKKFTERSALVNHQRTH, YTCLDCQKTFNQRSALTKHRRTH, YRCSVCSKSFIQNSDLVKHLRTH, YECPLCVKRFAESSALMKHKRTH, FRCSECSRSFTHNSDLTAHMRKH, YSCSKCRKTFKRWKSFLNHQQTH, YLCSHCNKGFIQNSDLVKHFRTH, YQCAECHKGFIQKSDLVKHLRTH, FKCSHCDKKFTERSALAKHQRTH, YKCSDCGKEFTQRSNLILHQRIH, YKCTLCDRTFIQNSDLVKHQKVH, HKCSKCDLTFSHWSTFMKHSKLH, FQCAECKKGFTQKSDLVKHIRVH, FKCLLCKKSFSQNSDLHKHWRIH, FPCYTCDKSFTERSALIKHHRTH, HKCSVCQKGFIQKSALTKHSRTH, YPCTQCGKSFIQNSDLVKHQRIH, YHCTECNKRFTEGSSLVKHRRTH, YRCPQCEKTFIQSSDLVKHLVVH, YPCTECGKVFHQRPALLKHLRTH, YPCNECDKSFFQTSDLVKHLRTH, YHCPECNKGFIQNSDLVKHQRTH, YTCSQCDKGFIQRSALTKHMRTH, YKCEQCQKCFIQNSDLVKHQRIH, YHCPDCDKRFTEGSSLIKHQRIH, YPCGVCGKSFSQSSNLLKHLKCH, FKCNDCGKCFAHRSVLIKHVRIH, YKCSQCTRSFIQKSDLVKHYRTH, YKCGLCERSFVEKSALSRHQRVH, YSCSECGKCFTHRSVFLKHWRMH, YTCKECGKSFSQSSALVKHVRIH, YPCSTCGKSFIQKSDLAKHQRIH, YTCTVCGKKFIDRSSVVKHSRTH, YKCNECTKGFVQKSDLVKHMRTH, and YGCNCCDRSFSTHSASVRHQRMC.

It belongs to the krueppel C2H2-type zinc-finger protein family. Phosphorylated. Phosphorylation enhances RNA binding. Expressed in oocytes, and in specialized cell types such as neural retina cones in adults.

Its subcellular location is the cytoplasm. Binds to poly-G sequences in RNA. May function in post-translational regulation processes. This is Zinc finger protein Xfin from Xenopus laevis (African clawed frog).